Here is a 200-residue protein sequence, read N- to C-terminus: Inducible T-cell costimulator (200 aa).

Residues 1-20 (MKPYFSCVFVFCFLIKLLTG) form the signal peptide. The Extracellular portion of the chain corresponds to 21–145 (ELNDLANHRM…LCCQLKLWLP (125 aa)). Residues 30 to 133 (MFSFHDGGVQ…LSGGYLLIYE (104 aa)) form the Ig-like V-type domain. 2 disulfides stabilise this stretch: C42-C109 and C63-C83. N-linked (GlcNAc...) asparagine glycosylation is found at N89 and N123. The chain crosses the membrane as a helical span at residues 146–166 (VGCAAFVAALLFGCIFIVWFA). Residues 167 to 200 (KKKYRSSVHDPNSEYMFMAAVNTNKKSRLAGMTS) lie on the Cytoplasmic side of the membrane.

In terms of assembly, homodimer; disulfide-linked. Interacts with ICOSLG. Interacts with PIK3R1. Interacts with TBK1; this interaction is critical for the maturation of T follicular regulatory cells. Post-translationally, N-glycosylated. As to expression, strongly expressed in the spleen and lung. Lower expression seen in liver, kidney and testis.

It is found in the cell membrane. In terms of biological role, stimulatory receptor expressed in activated or antigen-experienced T-cells that plays an important role in the immune response. Upon binding to its ligand ICOSL expressed on antigen presenting cells (APCs), delivers costimulatory signals that enhances all basic T-cell responses to a foreign antigen, namely proliferation, secretion of lymphokines including IL10, up-regulation of molecules that mediate cell-cell interaction, and effective help for antibody secretion by B-cells. Also acts as a costimulatory receptor critical for the differentiation of T follicular regulatory cells upon immune challenges such as viral infection. Mechanistically, potentiates TCR-induced calcium flux by augmenting PLCG1 activation and actin remodeling. In addition, activates PI3K signaling pathways independently of calcium flux. Essential both for efficient interaction between T and B-cells and for normal antibody responses to T-cell dependent antigens. Prevents the apoptosis of pre-activated T-cells. Plays a critical role in CD40-mediated class switching of immunoglobin isotypes. This chain is Inducible T-cell costimulator (Icos), found in Rattus norvegicus (Rat).